The sequence spans 321 residues: Phospho-N-acetylmuramoyl-pentapeptide-transferase (321 aa).

10 helical membrane-spanning segments follow: residues 1 to 21 (MVYLLAIIALLITFILVPVLI), 50 to 70 (MGGLTFLISIIITSILAIIFI), 76 to 96 (IILLLFVTIGFGLIGFIDDYI), 112 to 132 (FLAQIAIAVIFFILSQVFNLT), 140 to 160 (IPFINFEIPLSIAYVIFIVFW), 173 to 193 (GLDGLATGLSIIGFVMYAIMA), 198 to 218 (ATSIGLFCIIMIFALLGFLPF), 225 to 245 (VFMGDTGSLALGGIFATISIM), 250 to 270 (LSLLFIGFVFVAETLSVMIQV), and 300 to 320 (VVTVFWTVGLITGLIGLWIGV).

It belongs to the glycosyltransferase 4 family. MraY subfamily. It depends on Mg(2+) as a cofactor.

Its subcellular location is the cell membrane. It carries out the reaction UDP-N-acetyl-alpha-D-muramoyl-L-alanyl-gamma-D-glutamyl-L-lysyl-D-alanyl-D-alanine + di-trans,octa-cis-undecaprenyl phosphate = Mur2Ac(oyl-L-Ala-gamma-D-Glu-L-Lys-D-Ala-D-Ala)-di-trans,octa-cis-undecaprenyl diphosphate + UMP. It participates in cell wall biogenesis; peptidoglycan biosynthesis. Its function is as follows. Catalyzes the initial step of the lipid cycle reactions in the biosynthesis of the cell wall peptidoglycan: transfers peptidoglycan precursor phospho-MurNAc-pentapeptide from UDP-MurNAc-pentapeptide onto the lipid carrier undecaprenyl phosphate, yielding undecaprenyl-pyrophosphoryl-MurNAc-pentapeptide, known as lipid I. The polypeptide is Phospho-N-acetylmuramoyl-pentapeptide-transferase (Staphylococcus saprophyticus subsp. saprophyticus (strain ATCC 15305 / DSM 20229 / NCIMB 8711 / NCTC 7292 / S-41)).